A 352-amino-acid polypeptide reads, in one-letter code: UDP-N-acetylglucosamine--N-acetylmuramyl-(pentapeptide) pyrophosphoryl-undecaprenol N-acetylglucosamine transferase (352 aa).

UDP-N-acetyl-alpha-D-glucosamine-binding positions include Thr-11–Gly-13, Asn-120, Arg-161, Ser-188, and Gln-286.

Belongs to the glycosyltransferase 28 family. MurG subfamily.

It is found in the cell inner membrane. It carries out the reaction di-trans,octa-cis-undecaprenyl diphospho-N-acetyl-alpha-D-muramoyl-L-alanyl-D-glutamyl-meso-2,6-diaminopimeloyl-D-alanyl-D-alanine + UDP-N-acetyl-alpha-D-glucosamine = di-trans,octa-cis-undecaprenyl diphospho-[N-acetyl-alpha-D-glucosaminyl-(1-&gt;4)]-N-acetyl-alpha-D-muramoyl-L-alanyl-D-glutamyl-meso-2,6-diaminopimeloyl-D-alanyl-D-alanine + UDP + H(+). Its pathway is cell wall biogenesis; peptidoglycan biosynthesis. Functionally, cell wall formation. Catalyzes the transfer of a GlcNAc subunit on undecaprenyl-pyrophosphoryl-MurNAc-pentapeptide (lipid intermediate I) to form undecaprenyl-pyrophosphoryl-MurNAc-(pentapeptide)GlcNAc (lipid intermediate II). The protein is UDP-N-acetylglucosamine--N-acetylmuramyl-(pentapeptide) pyrophosphoryl-undecaprenol N-acetylglucosamine transferase of Prochlorococcus marinus (strain NATL1A).